The primary structure comprises 340 residues: Glyceraldehyde-3-phosphate dehydrogenase, cytosolic (340 aa).

Residues Arg16–Ile17, Asp38, and Arg85 contribute to the NAD(+) site. Residues Ser156–Thr158, Thr187, Thr216–Gly217, and Arg239 contribute to the D-glyceraldehyde 3-phosphate site. Cys157 serves as the catalytic Nucleophile. Asn321 contacts NAD(+).

This sequence belongs to the glyceraldehyde-3-phosphate dehydrogenase family. In terms of assembly, homotetramer.

The protein localises to the cytoplasm. It carries out the reaction D-glyceraldehyde 3-phosphate + phosphate + NAD(+) = (2R)-3-phospho-glyceroyl phosphate + NADH + H(+). It functions in the pathway carbohydrate degradation; glycolysis; pyruvate from D-glyceraldehyde 3-phosphate: step 1/5. Its function is as follows. Key enzyme in glycolysis that catalyzes the first step of the pathway by converting D-glyceraldehyde 3-phosphate (G3P) into 3-phospho-D-glyceroyl phosphate. Essential for the maintenance of cellular ATP levels and carbohydrate metabolism. In Taxus baccata (English yew), this protein is Glyceraldehyde-3-phosphate dehydrogenase, cytosolic.